A 288-amino-acid polypeptide reads, in one-letter code: uncharacterized protein (288 aa).

Residues 92–112 form a helical membrane-spanning segment; the sequence is LPTILVILGVIVVIAIVYAII. Positions 121 to 183 are disordered; sequence DDHNAASEKA…NDSEKLEIKA (63 aa). 2 stretches are compositionally biased toward basic and acidic residues: residues 136–146 and 154–181; these read SKYEIPKDSTL and SEKE…KLEI. Positions 147–185 form a coiled coil; the sequence is KENQNNSSEKETDTKKETKENEDKKKENDSEKLEIKAAG.

Its subcellular location is the cell membrane. This is an uncharacterized protein from Bacillus subtilis (strain 168).